The sequence spans 247 residues: Carboxy-S-adenosyl-L-methionine synthase (247 aa).

Residues Tyr-40, 65-67 (GSS), 90-91 (DN), 122-123 (DI), Asn-137, and Arg-204 each bind S-adenosyl-L-methionine.

It belongs to the class I-like SAM-binding methyltransferase superfamily. Cx-SAM synthase family. In terms of assembly, homodimer.

The enzyme catalyses prephenate + S-adenosyl-L-methionine = carboxy-S-adenosyl-L-methionine + 3-phenylpyruvate + H2O. Functionally, catalyzes the conversion of S-adenosyl-L-methionine (SAM) to carboxy-S-adenosyl-L-methionine (Cx-SAM). The polypeptide is Carboxy-S-adenosyl-L-methionine synthase (Pseudomonas savastanoi pv. phaseolicola (strain 1448A / Race 6) (Pseudomonas syringae pv. phaseolicola (strain 1448A / Race 6))).